A 372-amino-acid polypeptide reads, in one-letter code: Riboflavin biosynthesis protein RibD (372 aa).

The deaminase stretch occupies residues 1–150 (MLEFSSQDCV…KGFLKRMRQG (150 aa)). The region spanning 6-128 (SQDCVFMQRA…MLSDAGIEST (123 aa)) is the CMP/dCMP-type deaminase domain. Histidine 55 is a Zn(2+) binding site. Catalysis depends on glutamate 57, which acts as the Proton donor. Residues cysteine 80 and cysteine 89 each contribute to the Zn(2+) site. The interval 151-372 (MPFVQLKLAM…IKLTYTPKGV (222 aa)) is reductase. Residues alanine 159 and 166–169 (TAMA) contribute to the NADP(+) site. Serine 173 is a substrate binding site. Tryptophan 175 contributes to the NADP(+) binding site. Residue arginine 189 coordinates substrate. 2 residues coordinate NADP(+): threonine 201 and aspartate 205. The substrate site is built by leucine 209 and arginine 212. Serine 239 provides a ligand contact to NADP(+). Glutamate 302 lines the substrate pocket. Residue 304–310 (GANLSGS) participates in NADP(+) binding.

This sequence in the N-terminal section; belongs to the cytidine and deoxycytidylate deaminase family. The protein in the C-terminal section; belongs to the HTP reductase family. Zn(2+) is required as a cofactor.

It catalyses the reaction 2,5-diamino-6-hydroxy-4-(5-phosphoribosylamino)-pyrimidine + H2O + H(+) = 5-amino-6-(5-phospho-D-ribosylamino)uracil + NH4(+). The enzyme catalyses 5-amino-6-(5-phospho-D-ribitylamino)uracil + NADP(+) = 5-amino-6-(5-phospho-D-ribosylamino)uracil + NADPH + H(+). Its pathway is cofactor biosynthesis; riboflavin biosynthesis; 5-amino-6-(D-ribitylamino)uracil from GTP: step 2/4. It participates in cofactor biosynthesis; riboflavin biosynthesis; 5-amino-6-(D-ribitylamino)uracil from GTP: step 3/4. In terms of biological role, converts 2,5-diamino-6-(ribosylamino)-4(3h)-pyrimidinone 5'-phosphate into 5-amino-6-(ribosylamino)-2,4(1h,3h)-pyrimidinedione 5'-phosphate. The sequence is that of Riboflavin biosynthesis protein RibD (ribD) from Haemophilus influenzae (strain ATCC 51907 / DSM 11121 / KW20 / Rd).